A 198-amino-acid polypeptide reads, in one-letter code: MSALAVILVIGLSYLVGSVPTGYLIARHVKGIDIRGHGSGNIGATNVWRTLGPGWGLASLVGDTAKGIVAVLLGRAVGVPGLELLTGAAALTGHGWSVFLRFQGGKIIATSLGVLIMLPPVALATAAAVWIAVLALTRYVSLASIIAASSVPLAFALGGVGWRHVLFGLFLALVAVYKHRANIDRLLKGKESRFSFRK.

Transmembrane regions (helical) follow at residues 5 to 25 (AVIL…GYLI), 114 to 134 (VLIM…IAVL), and 154 to 176 (AFAL…LVAV).

It belongs to the PlsY family. Probably interacts with PlsX.

Its subcellular location is the cell membrane. The catalysed reaction is an acyl phosphate + sn-glycerol 3-phosphate = a 1-acyl-sn-glycero-3-phosphate + phosphate. Its pathway is lipid metabolism; phospholipid metabolism. Catalyzes the transfer of an acyl group from acyl-phosphate (acyl-PO(4)) to glycerol-3-phosphate (G3P) to form lysophosphatidic acid (LPA). This enzyme utilizes acyl-phosphate as fatty acyl donor, but not acyl-CoA or acyl-ACP. This is Glycerol-3-phosphate acyltransferase from Desulforudis audaxviator (strain MP104C).